A 624-amino-acid polypeptide reads, in one-letter code: APC membrane recruitment protein 2 (624 aa).

Disordered regions lie at residues 1 to 308 and 342 to 596; these read MDSH…PPSE and EDVG…IPVS. The segment covering 74-91 has biased composition (basic and acidic residues); the sequence is SGKKEDAGGGEAQGKDAP. Low complexity predominate over residues 101-111; that stretch reads SASSSVAKSHS. Composition is skewed to basic and acidic residues over residues 120 to 132 and 247 to 258; these read GRPE…ENAE and RRLEELCGERPD. Composition is skewed to low complexity over residues 272 to 282 and 295 to 307; these read ITGDIPITTIP and AAAP…DPPS. The span at 406 to 416 shows a compositional bias: gly residues; sequence TGGGGGGGGGT. A compositionally biased stretch (basic and acidic residues) spans 450-464; it reads NNKEEQKGREKEQHE. Residues 535–549 are compositionally biased toward polar residues; the sequence is PITTTCSLKTPSSTV.

Belongs to the Amer family.

Its subcellular location is the cell membrane. In terms of biological role, negative regulator of the canonical Wnt signaling pathway involved in neuroectodermal patterning. Acts by specifically binding phosphatidylinositol 4,5-bisphosphate (PtdIns(4,5)P2), translocating to the cell membrane and interacting with key regulators of the canonical Wnt signaling pathway, such as components of the beta-catenin destruction complex. This chain is APC membrane recruitment protein 2 (AMER2), found in Gallus gallus (Chicken).